The chain runs to 1026 residues: Multidrug resistance protein MdtC (1026 aa).

11 consecutive transmembrane segments (helical) span residues Ile-15–Ala-35, Glu-333–Leu-353, Leu-360–Cys-380, Leu-387–Leu-407, Val-431–Leu-451, Phe-463–Pro-483, Leu-528–Pro-548, Leu-853–Ser-873, Leu-897–Val-917, Pro-953–Gly-973, and Ile-984–Val-1004.

This sequence belongs to the resistance-nodulation-cell division (RND) (TC 2.A.6) family. MdtC subfamily. As to quaternary structure, part of a tripartite efflux system composed of MdtA, MdtB and MdtC. MdtC forms a heteromultimer with MdtB.

It localises to the cell inner membrane. This is Multidrug resistance protein MdtC from Salmonella heidelberg (strain SL476).